The chain runs to 267 residues: Cell cycle checkpoint protein RAD1 homolog mrt-2 (267 aa).

Belongs to the Rad1 family. In terms of assembly, probable component of the toroidal 9-1-1 (RAD9-RAD1-HUS1) complex, composed of hpr-9, mrt-2 and hus-1. Interacts with hus-1. Might associate with hpr-9.

The protein localises to the nucleus. The catalysed reaction is Exonucleolytic cleavage in the 3'- to 5'-direction to yield nucleoside 5'-phosphates.. May be a component of the 9-1-1 cell-cycle checkpoint response complex that plays a major role in DNA repair. Promotes DNA double strand break-induced cell cycle arrest and apoptosis, thereby playing a role in genome stability. Also required for telomere length maintenance and germline immortality. May possess 3'-&gt;5' double stranded DNA exonuclease activity. In Caenorhabditis elegans, this protein is Cell cycle checkpoint protein RAD1 homolog mrt-2.